A 431-amino-acid chain; its full sequence is Tol-Pal system protein TolB (431 aa).

Residues 1–26 form the signal peptide; it reads MSLMTKLGFRALVASCLIAAGGAANA. Positions 411–431 are disordered; the sequence is PQILSVQGGSVREPSWGPFMQ.

Belongs to the TolB family. As to quaternary structure, the Tol-Pal system is composed of five core proteins: the inner membrane proteins TolA, TolQ and TolR, the periplasmic protein TolB and the outer membrane protein Pal. They form a network linking the inner and outer membranes and the peptidoglycan layer.

It is found in the periplasm. Its function is as follows. Part of the Tol-Pal system, which plays a role in outer membrane invagination during cell division and is important for maintaining outer membrane integrity. This Burkholderia vietnamiensis (strain G4 / LMG 22486) (Burkholderia cepacia (strain R1808)) protein is Tol-Pal system protein TolB.